We begin with the raw amino-acid sequence, 444 residues long: Tubulin beta-8 chain (444 aa).

The MREI motif motif lies at 1–4 (MREI). Residues Gln-11, Glu-69, Ser-138, Gly-142, Thr-143, and Gly-144 each coordinate GTP. Glu-69 provides a ligand contact to Mg(2+). Residue Ser-172 is modified to Phosphoserine; by CDK1. GTP-binding residues include Asn-204 and Asn-226. Residues 423 to 444 (QQYQDATAEEEEDEEYAEEEVA) are disordered. Positions 429–444 (TAEEEEDEEYAEEEVA) are enriched in acidic residues. At Glu-436 the chain carries 5-glutamyl polyglutamate.

The protein belongs to the tubulin family. In terms of assembly, dimer of alpha and beta chains. A typical microtubule is a hollow water-filled tube with an outer diameter of 25 nm and an inner diameter of 15 nM. Alpha-beta heterodimers associate head-to-tail to form protofilaments running lengthwise along the microtubule wall with the beta-tubulin subunit facing the microtubule plus end conferring a structural polarity. Microtubules usually have 13 protofilaments but different protofilament numbers can be found in some organisms and specialized cells. Mg(2+) serves as cofactor. Post-translationally, some glutamate residues at the C-terminus are polyglutamylated, resulting in polyglutamate chains on the gamma-carboxyl group. Polyglutamylation plays a key role in microtubule severing by spastin (SPAST). SPAST preferentially recognizes and acts on microtubules decorated with short polyglutamate tails: severing activity by SPAST increases as the number of glutamates per tubulin rises from one to eight, but decreases beyond this glutamylation threshold. Glutamylation is also involved in cilia motility. In terms of processing, some glutamate residues at the C-terminus are monoglycylated but not polyglycylated due to the absence of functional TTLL10 in human. Monoglycylation is mainly limited to tubulin incorporated into cilia and flagella axonemes, which is required for their stability and maintenance. Flagella glycylation controls sperm motility. Both polyglutamylation and monoglycylation can coexist on the same protein on adjacent residues, and lowering glycylation levels increases polyglutamylation, and reciprocally. Phosphorylated on Ser-172 by CDK1 during the cell cycle, from metaphase to telophase, but not in interphase. This phosphorylation inhibits tubulin incorporation into microtubules. Expressed at a high level in oocytes, at different stages of development.

It is found in the cytoplasm. The protein resides in the cytoskeleton. The protein localises to the spindle. Its function is as follows. Tubulin is the major constituent of microtubules, a cylinder consisting of laterally associated linear protofilaments composed of alpha- and beta-tubulin heterodimers. Microtubules grow by the addition of GTP-tubulin dimers to the microtubule end, where a stabilizing cap forms. Below the cap, tubulin dimers are in GDP-bound state, owing to GTPase activity of alpha-tubulin. TUBB8 has a key role in meiotic spindle assembly and oocyte maturation. The sequence is that of Tubulin beta-8 chain from Homo sapiens (Human).